Reading from the N-terminus, the 108-residue chain is Large ribosomal subunit protein uL24 (108 aa).

Belongs to the universal ribosomal protein uL24 family. Part of the 50S ribosomal subunit.

One of two assembly initiator proteins, it binds directly to the 5'-end of the 23S rRNA, where it nucleates assembly of the 50S subunit. In terms of biological role, one of the proteins that surrounds the polypeptide exit tunnel on the outside of the subunit. The protein is Large ribosomal subunit protein uL24 of Mycoplasmopsis pulmonis (strain UAB CTIP) (Mycoplasma pulmonis).